We begin with the raw amino-acid sequence, 173 residues long: Large ribosomal subunit protein uL10 (173 aa).

This sequence belongs to the universal ribosomal protein uL10 family. Part of the ribosomal stalk of the 50S ribosomal subunit. The N-terminus interacts with L11 and the large rRNA to form the base of the stalk. The C-terminus forms an elongated spine to which L12 dimers bind in a sequential fashion forming a multimeric L10(L12)X complex.

Its function is as follows. Forms part of the ribosomal stalk, playing a central role in the interaction of the ribosome with GTP-bound translation factors. This is Large ribosomal subunit protein uL10 from Bifidobacterium animalis subsp. lactis (strain AD011).